Here is a 92-residue protein sequence, read N- to C-terminus: Small ribosomal subunit protein uS19 (92 aa).

The protein belongs to the universal ribosomal protein uS19 family.

Functionally, protein S19 forms a complex with S13 that binds strongly to the 16S ribosomal RNA. This chain is Small ribosomal subunit protein uS19, found in Desulfatibacillum aliphaticivorans.